The primary structure comprises 267 residues: Indole-3-glycerol phosphate synthase (267 aa).

It belongs to the TrpC family.

It catalyses the reaction 1-(2-carboxyphenylamino)-1-deoxy-D-ribulose 5-phosphate + H(+) = (1S,2R)-1-C-(indol-3-yl)glycerol 3-phosphate + CO2 + H2O. It functions in the pathway amino-acid biosynthesis; L-tryptophan biosynthesis; L-tryptophan from chorismate: step 4/5. This is Indole-3-glycerol phosphate synthase from Ralstonia pickettii (strain 12J).